We begin with the raw amino-acid sequence, 381 residues long: tRNA-specific 2-thiouridylase MnmA (381 aa).

ATP is bound by residues Ala-26–Ser-33 and Leu-52. The active-site Nucleophile is Cys-120. Residues Cys-120 and Cys-217 are joined by a disulfide bond. Gly-144 is a binding site for ATP. The segment at Arg-166–Gln-168 is interaction with tRNA. The active-site Cysteine persulfide intermediate is the Cys-217.

The protein belongs to the MnmA/TRMU family.

The protein localises to the cytoplasm. The enzyme catalyses S-sulfanyl-L-cysteinyl-[protein] + uridine(34) in tRNA + AH2 + ATP = 2-thiouridine(34) in tRNA + L-cysteinyl-[protein] + A + AMP + diphosphate + H(+). Catalyzes the 2-thiolation of uridine at the wobble position (U34) of tRNA, leading to the formation of s(2)U34. This Ruegeria sp. (strain TM1040) (Silicibacter sp.) protein is tRNA-specific 2-thiouridylase MnmA.